Here is a 267-residue protein sequence, read N- to C-terminus: Tryptophan synthase alpha chain (267 aa).

Residues glutamate 43 and aspartate 54 each act as proton acceptor in the active site.

This sequence belongs to the TrpA family. Tetramer of two alpha and two beta chains.

The enzyme catalyses (1S,2R)-1-C-(indol-3-yl)glycerol 3-phosphate + L-serine = D-glyceraldehyde 3-phosphate + L-tryptophan + H2O. It functions in the pathway amino-acid biosynthesis; L-tryptophan biosynthesis; L-tryptophan from chorismate: step 5/5. Functionally, the alpha subunit is responsible for the aldol cleavage of indoleglycerol phosphate to indole and glyceraldehyde 3-phosphate. This Bacillus subtilis subsp. natto protein is Tryptophan synthase alpha chain.